Consider the following 180-residue polypeptide: tRNA-splicing endonuclease (180 aa).

Catalysis depends on residues tyrosine 117, histidine 125, and lysine 156.

This sequence belongs to the tRNA-intron endonuclease family. Archaeal short subfamily. As to quaternary structure, homotetramer; although the tetramer contains four active sites, only two participate in the cleavage. Therefore, it should be considered as a dimer of dimers.

It carries out the reaction pretRNA = a 3'-half-tRNA molecule with a 5'-OH end + a 5'-half-tRNA molecule with a 2',3'-cyclic phosphate end + an intron with a 2',3'-cyclic phosphate and a 5'-hydroxyl terminus.. In terms of biological role, endonuclease that removes tRNA introns. Cleaves pre-tRNA at the 5'- and 3'-splice sites to release the intron. The products are an intron and two tRNA half-molecules bearing 2',3' cyclic phosphate and 5'-OH termini. Recognizes a pseudosymmetric substrate in which 2 bulged loops of 3 bases are separated by a stem of 4 bp. The polypeptide is tRNA-splicing endonuclease (Sulfurisphaera tokodaii (strain DSM 16993 / JCM 10545 / NBRC 100140 / 7) (Sulfolobus tokodaii)).